The primary structure comprises 272 residues: Glutamate racemase (272 aa).

Substrate-binding positions include 16 to 17 (DS) and 48 to 49 (YG). The Proton donor/acceptor role is filled by Cys79. 80 to 81 (NT) provides a ligand contact to substrate. Cys191 (proton donor/acceptor) is an active-site residue. 192-193 (TH) provides a ligand contact to substrate.

Belongs to the aspartate/glutamate racemases family.

The enzyme catalyses L-glutamate = D-glutamate. It functions in the pathway cell wall biogenesis; peptidoglycan biosynthesis. Functionally, provides the (R)-glutamate required for cell wall biosynthesis. The sequence is that of Glutamate racemase from Chlorobaculum parvum (strain DSM 263 / NCIMB 8327) (Chlorobium vibrioforme subsp. thiosulfatophilum).